A 67-amino-acid polypeptide reads, in one-letter code: Large ribosomal subunit protein uL29 (67 aa).

It belongs to the universal ribosomal protein uL29 family.

In Polaromonas naphthalenivorans (strain CJ2), this protein is Large ribosomal subunit protein uL29.